A 189-amino-acid polypeptide reads, in one-letter code: MIQRLKKFYLDNVVPDLYQKFEYTNIHQLPYLKKIVINCGFGEASQNSKFLEGTIKDLSIIASQKPIVTRARKAIAGFQIRKKMPVGVCVTLRGETMYAFLDRLIHLALPRIKDFQGLNWKSFDGYGNFHFGIREQLIFPEIHYDKIDKIRGMNISIITSCHTDTEALHFLTSLGIPFDSRDSFSTQER.

This sequence belongs to the universal ribosomal protein uL5 family. In terms of assembly, part of the 50S ribosomal subunit; contacts the 5S rRNA.

It localises to the plastid. The protein resides in the chloroplast. Functionally, binds 5S rRNA, forms part of the central protuberance of the 50S subunit. The sequence is that of Large ribosomal subunit protein uL5c (rpl5) from Chara vulgaris (Common stonewort).